Here is a 162-residue protein sequence, read N- to C-terminus: Phosphopantetheine adenylyltransferase (162 aa).

A substrate-binding site is contributed by serine 11. Residues 11-12 (SF) and histidine 19 contribute to the ATP site. Substrate is bound by residues lysine 43, valine 76, and arginine 90. Residues 91 to 93 (GLR), glutamate 101, and 126 to 132 (HLYISSS) contribute to the ATP site.

This sequence belongs to the bacterial CoaD family. As to quaternary structure, homohexamer. Mg(2+) is required as a cofactor.

Its subcellular location is the cytoplasm. The catalysed reaction is (R)-4'-phosphopantetheine + ATP + H(+) = 3'-dephospho-CoA + diphosphate. Its pathway is cofactor biosynthesis; coenzyme A biosynthesis; CoA from (R)-pantothenate: step 4/5. With respect to regulation, is inhibited by a series of cycloalkyl pyrimidines, which also show suppression of bacterial growth. In terms of biological role, reversibly transfers an adenylyl group from ATP to 4'-phosphopantetheine, yielding dephospho-CoA (dPCoA) and pyrophosphate. This chain is Phosphopantetheine adenylyltransferase, found in Streptococcus pneumoniae (strain ATCC BAA-255 / R6).